The sequence spans 313 residues: Beta-ribofuranosylphenol 5'-phosphate synthase (313 aa).

The protein belongs to the beta-RFA-P synthase family. Homodimer.

The enzyme catalyses 5-phospho-alpha-D-ribose 1-diphosphate + 4-hydroxybenzoate + H(+) = 4-(beta-D-ribofuranosyl)phenol 5'-phosphate + CO2 + diphosphate. The catalysed reaction is 4-aminobenzoate + 5-phospho-alpha-D-ribose 1-diphosphate + H(+) = 4-(beta-D-ribofuranosyl)aminobenzene 5'-phosphate + CO2 + diphosphate. Its pathway is cofactor biosynthesis; 5,6,7,8-tetrahydromethanopterin biosynthesis. In terms of biological role, catalyzes the condensation of 4-hydroxybenzoate (HB) with 5-phospho-alpha-D-ribose 1-diphosphate (PRPP) to produce beta-ribofuranosylphenol 5'-phosphate (beta-RFH-P). Also catalyzes the condensation of 4-aminobenzoate (pABA) with PRPP to produce beta-ribofuranosylaminobenzene 5'-phosphate (beta-RFA-P). This is Beta-ribofuranosylphenol 5'-phosphate synthase from Archaeoglobus fulgidus (strain ATCC 49558 / DSM 4304 / JCM 9628 / NBRC 100126 / VC-16).